The chain runs to 118 residues: UPF0102 protein Nwi_0116 (118 aa).

It belongs to the UPF0102 family.

The polypeptide is UPF0102 protein Nwi_0116 (Nitrobacter winogradskyi (strain ATCC 25391 / DSM 10237 / CIP 104748 / NCIMB 11846 / Nb-255)).